Reading from the N-terminus, the 87-residue chain is UPF0250 protein YE3006 (87 aa).

The protein belongs to the UPF0250 family.

This chain is UPF0250 protein YE3006, found in Yersinia enterocolitica serotype O:8 / biotype 1B (strain NCTC 13174 / 8081).